We begin with the raw amino-acid sequence, 234 residues long: MGQKIHPIGFRLGVQRIWTAKWYGSNRNFSDTLLEDIKVRDYLKKKLSHASVSKVLIERPAKNARITIFSGRPGVVIGKKGEDIEVLRGELARLMSVPVHVNIEEVRKPETDAQIVADGIAQQLEKRVMFRRAMKRAMQNAMRLGAQGIKIMSSGRLNGAEIARTEWYREGRVPLHTLRAEIDYGFAEAKTTYGIIGIKVWVYKGDALTRGEQPAAAEQEKRGKKSGVKHAAAS.

In terms of domain architecture, KH type-2 spans Val-39 to Arg-107. The tract at residues Glu-212–Ser-234 is disordered.

The protein belongs to the universal ribosomal protein uS3 family. As to quaternary structure, part of the 30S ribosomal subunit. Forms a tight complex with proteins S10 and S14.

Binds the lower part of the 30S subunit head. Binds mRNA in the 70S ribosome, positioning it for translation. This is Small ribosomal subunit protein uS3 from Thiobacillus denitrificans (strain ATCC 25259 / T1).